The sequence spans 335 residues: dTDP-glucose 4,6-dehydratase (335 aa).

Residues 11 to 12 (FI), 38 to 41 (DKLT), 61 to 62 (DI), 81 to 85 (FAAET), and T100 each bind NAD(+). T85 provides a ligand contact to substrate. T125 contributes to the substrate binding site. D126 serves as the catalytic Proton donor. Residues E127 and Y149 each act as proton acceptor in the active site. 149-153 (YSASK) provides a ligand contact to NAD(+). Residue N178 coordinates substrate. Residue N179 coordinates NAD(+). Substrate-binding positions include 188-189 (KI), 204-206 (PLY), R213, N248, and 271-275 (DRKGH).

Belongs to the NAD(P)-dependent epimerase/dehydratase family. dTDP-glucose dehydratase subfamily. The cofactor is NAD(+).

It carries out the reaction dTDP-alpha-D-glucose = dTDP-4-dehydro-6-deoxy-alpha-D-glucose + H2O. The protein operates within antibiotic biosynthesis. In terms of biological role, involved in the biosynthesis of the two 2,6-deoxysugars, dTDP-L-oleandrose and dTDP-D-desosamine, attached to the macrolactone ring oleandolide to produce the aglycone antibiotic oleandomycin. Catalyzes the dehydration of dTDP-D-glucose to form dTDP-6-deoxy-D-xylo-4-hexulose via a three-step process involving oxidation, dehydration and reduction. The protein is dTDP-glucose 4,6-dehydratase of Streptomyces antibioticus.